The following is a 265-amino-acid chain: Capsule polysaccharide export inner-membrane protein BexB (265 aa).

A run of 6 helical transmembrane segments spans residues 37-57 (IGFF…VMMW), 64-84 (KFST…AMMW), 118-138 (LLEV…LVMI), 151-171 (LIAW…ICAI), 178-198 (FGKI…AFFF), and 235-255 (ESIG…LVMV). The region spanning 37–258 (IGFFWLFVEP…LLGLVMVKNF (222 aa)) is the ABC transmembrane type-2 domain.

Belongs to the ABC-2 integral membrane protein family.

It is found in the cell inner membrane. Functionally, may form an ATP-driven capsule polysaccharide export apparatus, in association with the BexA, BexC and BexD proteins. The protein is Capsule polysaccharide export inner-membrane protein BexB (bexB) of Haemophilus influenzae.